The chain runs to 90 residues: Envelope protein US9 (90 aa).

Topologically, residues 1–67 (MTSRLSDPNS…RRRRTRCVGM (67 aa)) are intravirion. An Internalization motif motif is present at residues 21 to 24 (YPTA). The acidic stretch occupies residues 30 to 39 (EAYYSESEDE). Ser-34 and Ser-36 each carry phosphoserine; by host CK2. A helical; Signal-anchor for type II membrane protein transmembrane segment spans residues 68–88 (VIACLLVAVLSGGFGALLMWL). Over 89 to 90 (LR) the chain is Virion surface.

The protein belongs to the alphaherpesvirinae envelope protein US9 family. Post-translationally, phosphorylated on serines within the acidic cluster, possibly by host CK2. Phosphorylation determines whether endocytosed viral US9 traffics to the trans-Golgi network or recycles to the cell membrane.

The protein resides in the virion membrane. Its subcellular location is the host Golgi apparatus membrane. It is found in the host smooth endoplasmic reticulum membrane. The protein localises to the host cell membrane. In terms of biological role, essential for the anterograde spread of the infection throughout the host nervous system. Together with the gE/gI heterodimer, US9 is involved in the sorting and transport of viral structural components toward axon tips. This chain is Envelope protein US9, found in Homo sapiens (Human).